A 341-amino-acid chain; its full sequence is Elongation factor Ts (341 aa).

The tract at residues 80–83 is involved in Mg(2+) ion dislocation from EF-Tu; that stretch reads TDFV.

The protein belongs to the EF-Ts family.

The protein resides in the cytoplasm. In terms of biological role, associates with the EF-Tu.GDP complex and induces the exchange of GDP to GTP. It remains bound to the aminoacyl-tRNA.EF-Tu.GTP complex up to the GTP hydrolysis stage on the ribosome. The protein is Elongation factor Ts of Lactobacillus acidophilus (strain ATCC 700396 / NCK56 / N2 / NCFM).